We begin with the raw amino-acid sequence, 563 residues long: Bifunctional dihydrofolate reductase-thymidylate synthase (563 aa).

Residues 3–195 (KFNIIAAINN…ILLRFQEYSV (193 aa)) form the DHFR domain. 117-124 (GGGVIYDL) serves as a coordination point for NADP(+). The tract at residues 275-563 (YIELVKTIME…CPSISAEMIA (289 aa)) is thymidylate synthase. Arg292 lines the dUMP pocket. The active site involves Cys435. DUMP contacts are provided by residues His436, 464–468 (QRSWD), Asn474, and 504–506 (HIY).

In the N-terminal section; belongs to the dihydrofolate reductase family. The protein in the C-terminal section; belongs to the thymidylate synthase family.

It carries out the reaction (6S)-5,6,7,8-tetrahydrofolate + NADP(+) = 7,8-dihydrofolate + NADPH + H(+). The catalysed reaction is dUMP + (6R)-5,10-methylene-5,6,7,8-tetrahydrofolate = 7,8-dihydrofolate + dTMP. It participates in cofactor biosynthesis; tetrahydrofolate biosynthesis; 5,6,7,8-tetrahydrofolate from 7,8-dihydrofolate: step 1/1. Functionally, bifunctional enzyme. Involved in de novo dTMP biosynthesis. Key enzyme in folate metabolism. Catalyzes an essential reaction for de novo glycine and purine synthesis, DNA precursor synthesis, and for the conversion of dUMP to dTMP. In Acanthamoeba polyphaga mimivirus (APMV), this protein is Bifunctional dihydrofolate reductase-thymidylate synthase.